The sequence spans 337 residues: Putative 4-hydroxythreonine-4-phosphate dehydrogenase 2 (337 aa).

The a divalent metal cation site is built by His-173, His-217, and His-274.

The protein belongs to the PdxA family. Homodimer. The cofactor is Zn(2+). Requires Mg(2+) as cofactor. Co(2+) is required as a cofactor.

The protein resides in the cytoplasm. It catalyses the reaction 4-(phosphooxy)-L-threonine + NAD(+) = 3-amino-2-oxopropyl phosphate + CO2 + NADH. Its pathway is cofactor biosynthesis; pyridoxine 5'-phosphate biosynthesis; pyridoxine 5'-phosphate from D-erythrose 4-phosphate: step 4/5. Its function is as follows. Catalyzes the NAD(P)-dependent oxidation of 4-(phosphooxy)-L-threonine (HTP) into 2-amino-3-oxo-4-(phosphooxy)butyric acid which spontaneously decarboxylates to form 3-amino-2-oxopropyl phosphate (AHAP). This chain is Putative 4-hydroxythreonine-4-phosphate dehydrogenase 2, found in Pseudomonas aeruginosa (strain ATCC 15692 / DSM 22644 / CIP 104116 / JCM 14847 / LMG 12228 / 1C / PRS 101 / PAO1).